Consider the following 94-residue polypeptide: Small ribosomal subunit protein uS19 (94 aa).

The protein belongs to the universal ribosomal protein uS19 family.

Protein S19 forms a complex with S13 that binds strongly to the 16S ribosomal RNA. This Buchnera aphidicola subsp. Cinara cedri (strain Cc) protein is Small ribosomal subunit protein uS19.